We begin with the raw amino-acid sequence, 450 residues long: 3-phosphoshikimate 1-carboxyvinyltransferase (450 aa).

The tract at residues 1 to 23 is disordered; it reads MSSHGAPIPMTSSACGPLTGEAR. Residues K28, S29, and R33 each coordinate 3-phosphoshikimate. K28 is a phosphoenolpyruvate binding site. Phosphoenolpyruvate is bound by residues G101 and R129. The 3-phosphoshikimate site is built by S174, Q176, D327, and K354. Q176 contacts phosphoenolpyruvate. D327 serves as the catalytic Proton acceptor. Phosphoenolpyruvate-binding residues include R358 and R403.

The protein belongs to the EPSP synthase family. Monomer.

The protein localises to the cytoplasm. The enzyme catalyses 3-phosphoshikimate + phosphoenolpyruvate = 5-O-(1-carboxyvinyl)-3-phosphoshikimate + phosphate. Its pathway is metabolic intermediate biosynthesis; chorismate biosynthesis; chorismate from D-erythrose 4-phosphate and phosphoenolpyruvate: step 6/7. Its function is as follows. Catalyzes the transfer of the enolpyruvyl moiety of phosphoenolpyruvate (PEP) to the 5-hydroxyl of shikimate-3-phosphate (S3P) to produce enolpyruvyl shikimate-3-phosphate and inorganic phosphate. This is 3-phosphoshikimate 1-carboxyvinyltransferase from Roseobacter denitrificans (strain ATCC 33942 / OCh 114) (Erythrobacter sp. (strain OCh 114)).